The chain runs to 145 residues: Leghemoglobin-1 (145 aa).

Residues 3-145 (AFSDKQEALV…ELAAAIKKAY (143 aa)) form the Globin domain. Nitrated tyrosine is present on residues Y26 and Y31. S46 contributes to the heme b binding site. Residue S46 is modified to Phosphoserine. Position 62 (H62) interacts with O2. Residues K65, H93, and K96 each contribute to the heme b site. Y134 bears the Nitrated tyrosine mark.

The protein belongs to the plant globin family. In terms of assembly, monomer. Nitrated in effective nodules and particularly in hypoxic conditions; this mechanism may play a protective role in the symbiosis by buffering toxic peroxynitrite NO(2)(-). Nitration level decrease during nodule senescence. Post-translationally, phosphorylation at Ser-46 disrupts the molecular environment of its porphyrin ring oxygen binding pocket, thus leading to a reduced oxygen consumption and to the delivery of oxygen O(2) to symbiosomes. In terms of tissue distribution, root nodules.

The protein localises to the cytoplasm. Its subcellular location is the cytosol. It localises to the nucleus. Leghemoglobin that reversibly binds oxygen O(2) through a pentacoordinated heme iron. In root nodules, facilitates the diffusion of oxygen to the bacteroids while preventing the bacterial nitrogenase from being inactivated by buffering dioxygen, nitric oxide and carbon monoxide, and promoting the formation of reactive oxygen species (ROS, e.g. H(2)O(2)). This role is essential for symbiotic nitrogen fixation (SNF). The sequence is that of Leghemoglobin-1 from Vigna unguiculata (Cowpea).